Here is a 447-residue protein sequence, read N- to C-terminus: Argininosuccinate synthase (447 aa).

ATP contacts are provided by residues 17-25 (AFSGGLDTS) and A43. Y99 contributes to the L-citrulline binding site. ATP contacts are provided by G129 and T131. Residues T131, N135, and D136 each coordinate L-aspartate. N135 contributes to the L-citrulline binding site. D136 contributes to the ATP binding site. L-citrulline-binding residues include R139 and S192. Position 194 (D194) interacts with ATP. T201, E203, and E280 together coordinate L-citrulline.

This sequence belongs to the argininosuccinate synthase family. Type 2 subfamily. As to quaternary structure, homotetramer.

It is found in the cytoplasm. The catalysed reaction is L-citrulline + L-aspartate + ATP = 2-(N(omega)-L-arginino)succinate + AMP + diphosphate + H(+). It participates in amino-acid biosynthesis; L-arginine biosynthesis; L-arginine from L-ornithine and carbamoyl phosphate: step 2/3. This Escherichia coli O1:K1 / APEC protein is Argininosuccinate synthase.